Consider the following 309-residue polypeptide: Ribosomal protein L11 methyltransferase (309 aa).

The S-adenosyl-L-methionine site is built by Thr-160, Gly-181, Asp-203, and Asn-245.

It belongs to the methyltransferase superfamily. PrmA family.

The protein localises to the cytoplasm. The enzyme catalyses L-lysyl-[protein] + 3 S-adenosyl-L-methionine = N(6),N(6),N(6)-trimethyl-L-lysyl-[protein] + 3 S-adenosyl-L-homocysteine + 3 H(+). In terms of biological role, methylates ribosomal protein L11. The polypeptide is Ribosomal protein L11 methyltransferase (Caldanaerobacter subterraneus subsp. tengcongensis (strain DSM 15242 / JCM 11007 / NBRC 100824 / MB4) (Thermoanaerobacter tengcongensis)).